The following is a 68-amino-acid chain: Large ribosomal subunit protein uL30 (68 aa).

This sequence belongs to the universal ribosomal protein uL30 family. Part of the 50S ribosomal subunit.

The polypeptide is Large ribosomal subunit protein uL30 (Kocuria rhizophila (strain ATCC 9341 / DSM 348 / NBRC 103217 / DC2201)).